Reading from the N-terminus, the 232-residue chain is MTQTNDSPSIKAKKAAALKAVEFVQDQMIIGLGTGSTIAYFIEALGKRCQAGLKITAIASSERSMRQARLVGIPIVDSDTILELDLTIDGADEIDPLKQMIKGGGGALLREKLIASASKEMIVVIDETKLVNKLGKFPVATEISIFTFRHIVKKLKDHGYCGSLRVNQDQSLYRTDNGNYIFDICFPEPIDNPIFEHNRLKSFAGVLETGLFFNLAGRVIIGYQNGMTKIVA.

Substrate-binding positions include 34–37, 89–92, and 102–105; these read TGST, DGAD, and KGGG. The Proton acceptor role is filled by E111. Substrate is bound at residue K129.

The protein belongs to the ribose 5-phosphate isomerase family. Homodimer.

The catalysed reaction is aldehydo-D-ribose 5-phosphate = D-ribulose 5-phosphate. It functions in the pathway carbohydrate degradation; pentose phosphate pathway; D-ribose 5-phosphate from D-ribulose 5-phosphate (non-oxidative stage): step 1/1. Catalyzes the reversible conversion of ribose-5-phosphate to ribulose 5-phosphate. In Protochlamydia amoebophila (strain UWE25), this protein is Ribose-5-phosphate isomerase A.